Reading from the N-terminus, the 360-residue chain is S-adenosylmethionine:tRNA ribosyltransferase-isomerase (360 aa).

This sequence belongs to the QueA family. Monomer.

The protein localises to the cytoplasm. It carries out the reaction 7-aminomethyl-7-carbaguanosine(34) in tRNA + S-adenosyl-L-methionine = epoxyqueuosine(34) in tRNA + adenine + L-methionine + 2 H(+). It functions in the pathway tRNA modification; tRNA-queuosine biosynthesis. Functionally, transfers and isomerizes the ribose moiety from AdoMet to the 7-aminomethyl group of 7-deazaguanine (preQ1-tRNA) to give epoxyqueuosine (oQ-tRNA). In Nitrobacter winogradskyi (strain ATCC 25391 / DSM 10237 / CIP 104748 / NCIMB 11846 / Nb-255), this protein is S-adenosylmethionine:tRNA ribosyltransferase-isomerase.